Here is an 82-residue protein sequence, read N- to C-terminus: Small ribosomal subunit protein bS16 (82 aa).

The protein belongs to the bacterial ribosomal protein bS16 family.

The polypeptide is Small ribosomal subunit protein bS16 (Yersinia enterocolitica serotype O:8 / biotype 1B (strain NCTC 13174 / 8081)).